The chain runs to 364 residues: S-adenosylmethionine:tRNA ribosyltransferase-isomerase (364 aa).

Belongs to the QueA family. As to quaternary structure, monomer.

The protein localises to the cytoplasm. The catalysed reaction is 7-aminomethyl-7-carbaguanosine(34) in tRNA + S-adenosyl-L-methionine = epoxyqueuosine(34) in tRNA + adenine + L-methionine + 2 H(+). The protein operates within tRNA modification; tRNA-queuosine biosynthesis. In terms of biological role, transfers and isomerizes the ribose moiety from AdoMet to the 7-aminomethyl group of 7-deazaguanine (preQ1-tRNA) to give epoxyqueuosine (oQ-tRNA). The protein is S-adenosylmethionine:tRNA ribosyltransferase-isomerase of Synechococcus sp. (strain CC9902).